The primary structure comprises 490 residues: Aspartyl/glutamyl-tRNA(Asn/Gln) amidotransferase subunit B (490 aa).

This sequence belongs to the GatB/GatE family. GatB subfamily. Heterotrimer of A, B and C subunits.

It carries out the reaction L-glutamyl-tRNA(Gln) + L-glutamine + ATP + H2O = L-glutaminyl-tRNA(Gln) + L-glutamate + ADP + phosphate + H(+). The enzyme catalyses L-aspartyl-tRNA(Asn) + L-glutamine + ATP + H2O = L-asparaginyl-tRNA(Asn) + L-glutamate + ADP + phosphate + 2 H(+). Functionally, allows the formation of correctly charged Asn-tRNA(Asn) or Gln-tRNA(Gln) through the transamidation of misacylated Asp-tRNA(Asn) or Glu-tRNA(Gln) in organisms which lack either or both of asparaginyl-tRNA or glutaminyl-tRNA synthetases. The reaction takes place in the presence of glutamine and ATP through an activated phospho-Asp-tRNA(Asn) or phospho-Glu-tRNA(Gln). The protein is Aspartyl/glutamyl-tRNA(Asn/Gln) amidotransferase subunit B of Methylobacterium sp. (strain 4-46).